The primary structure comprises 161 residues: Lipoprotein signal peptidase (161 aa).

The next 4 helical transmembrane spans lie at 8 to 28, 40 to 60, 67 to 87, and 91 to 111; these read LKYF…KYLA, ITSF…SLLS, QMIM…YLII, and ITEK…LGNF. Catalysis depends on residues Asp122 and Asp140. The chain crosses the membrane as a helical span at residues 136 to 156; the sequence is FNIADSAITCGVVILIAASLF.

The protein belongs to the peptidase A8 family.

It is found in the cell inner membrane. It carries out the reaction Release of signal peptides from bacterial membrane prolipoproteins. Hydrolyzes -Xaa-Yaa-Zaa-|-(S,diacylglyceryl)Cys-, in which Xaa is hydrophobic (preferably Leu), and Yaa (Ala or Ser) and Zaa (Gly or Ala) have small, neutral side chains.. The protein operates within protein modification; lipoprotein biosynthesis (signal peptide cleavage). Functionally, this protein specifically catalyzes the removal of signal peptides from prolipoproteins. The protein is Lipoprotein signal peptidase of Francisella tularensis subsp. tularensis (strain FSC 198).